The primary structure comprises 329 residues: Ketol-acid reductoisomerase (NADP(+)) (329 aa).

A KARI N-terminal Rossmann domain is found at 2 to 181 (MKKYYESDAD…GATRAVVLET (180 aa)). NADP(+)-binding positions include 25-28 (YGSQ), Arg-48, Ser-52, and 82-85 (DELQ). His-107 is an active-site residue. Gly-133 provides a ligand contact to NADP(+). Residues 182–327 (TFREETETDL…KEVRAMMPQF (146 aa)) enclose the KARI C-terminal knotted domain. Mg(2+) is bound by residues Asp-190, Glu-194, Glu-226, and Glu-230. Residue Ser-251 coordinates substrate.

Belongs to the ketol-acid reductoisomerase family. It depends on Mg(2+) as a cofactor.

The catalysed reaction is (2R)-2,3-dihydroxy-3-methylbutanoate + NADP(+) = (2S)-2-acetolactate + NADPH + H(+). It carries out the reaction (2R,3R)-2,3-dihydroxy-3-methylpentanoate + NADP(+) = (S)-2-ethyl-2-hydroxy-3-oxobutanoate + NADPH + H(+). The protein operates within amino-acid biosynthesis; L-isoleucine biosynthesis; L-isoleucine from 2-oxobutanoate: step 2/4. It participates in amino-acid biosynthesis; L-valine biosynthesis; L-valine from pyruvate: step 2/4. Its function is as follows. Involved in the biosynthesis of branched-chain amino acids (BCAA). Catalyzes an alkyl-migration followed by a ketol-acid reduction of (S)-2-acetolactate (S2AL) to yield (R)-2,3-dihydroxy-isovalerate. In the isomerase reaction, S2AL is rearranged via a Mg-dependent methyl migration to produce 3-hydroxy-3-methyl-2-ketobutyrate (HMKB). In the reductase reaction, this 2-ketoacid undergoes a metal-dependent reduction by NADPH to yield (R)-2,3-dihydroxy-isovalerate. This is Ketol-acid reductoisomerase (NADP(+)) from Methanoregula boonei (strain DSM 21154 / JCM 14090 / 6A8).